A 739-amino-acid chain; its full sequence is POU domain, class 2, transcription factor 1 (739 aa).

Over residues 1-11 (MNNPSETSKPS) the composition is skewed to polar residues. Disordered regions lie at residues 1 to 39 (MNNP…GGPI), 67 to 95 (SLNV…SVQA), 253 to 277 (TPIQ…EEPS), 353 to 378 (DSTL…RRKK), and 489 to 553 (SVTG…SSPL). Residues 81–95 (SQQPSQPSQQPSVQA) are compositionally biased toward low complexity. A POU-specific domain is found at 274 to 348 (EEPSDLEELE…LLEKWLNDAE (75 aa)). The segment covering 353–364 (DSTLSSPSALNS) has biased composition (low complexity). The segment at residues 375–434 (RRKKRTSIETNIRVALEKSFLENQKPTSEEITMIADQLNMEKEVIRVWFCNRRQKEKRIN) is a DNA-binding region (homeobox). Residues 489 to 552 (SVTGTTETTS…QTTSTPLSSP (64 aa)) are compositionally biased toward low complexity.

Belongs to the POU transcription factor family. Class-2 subfamily. Interacts with NR3C1, AR and PGR.

The protein resides in the nucleus. Its function is as follows. Transcription factor that binds to the octamer motif (5'-ATTTGCAT-3') and activates the promoters of the genes for some small nuclear RNAs (snRNA) and of genes such as those for histone H2B and immunoglobulins. Modulates transcription transactivation by NR3C1, AR and PGR. The chain is POU domain, class 2, transcription factor 1 (POU2F1) from Gallus gallus (Chicken).